The following is a 212-amino-acid chain: Phosphatidylserine decarboxylase proenzyme (212 aa).

Catalysis depends on S182, which acts as the Schiff-base intermediate with substrate; via pyruvic acid. S182 is modified (pyruvic acid (Ser); by autocatalysis).

This sequence belongs to the phosphatidylserine decarboxylase family. PSD-A subfamily. In terms of assembly, heterodimer of a large membrane-associated beta subunit and a small pyruvoyl-containing alpha subunit. The cofactor is pyruvate. In terms of processing, is synthesized initially as an inactive proenzyme. Formation of the active enzyme involves a self-maturation process in which the active site pyruvoyl group is generated from an internal serine residue via an autocatalytic post-translational modification. Two non-identical subunits are generated from the proenzyme in this reaction, and the pyruvate is formed at the N-terminus of the alpha chain, which is derived from the carboxyl end of the proenzyme. The post-translation cleavage follows an unusual pathway, termed non-hydrolytic serinolysis, in which the side chain hydroxyl group of the serine supplies its oxygen atom to form the C-terminus of the beta chain, while the remainder of the serine residue undergoes an oxidative deamination to produce ammonia and the pyruvoyl prosthetic group on the alpha chain.

It localises to the cell membrane. It catalyses the reaction a 1,2-diacyl-sn-glycero-3-phospho-L-serine + H(+) = a 1,2-diacyl-sn-glycero-3-phosphoethanolamine + CO2. It functions in the pathway phospholipid metabolism; phosphatidylethanolamine biosynthesis; phosphatidylethanolamine from CDP-diacylglycerol: step 2/2. In terms of biological role, catalyzes the formation of phosphatidylethanolamine (PtdEtn) from phosphatidylserine (PtdSer). This Paraburkholderia phytofirmans (strain DSM 17436 / LMG 22146 / PsJN) (Burkholderia phytofirmans) protein is Phosphatidylserine decarboxylase proenzyme.